Here is a 637-residue protein sequence, read N- to C-terminus: Glutathione hydrolase 3 (637 aa).

Residues 28 to 48 traverse the membrane as a helical segment; it reads LKISLLLLLILLATSGYYSFS. An N-linked (GlcNAc...) asparagine glycan is attached at Asn50. Residue Arg147 participates in L-glutamate binding. 3 N-linked (GlcNAc...) asparagine glycosylation sites follow: Asn271, Asn374, and Asn398. Thr418 serves as the catalytic Nucleophile. Residues Thr436, Asn438, Glu457, Asp460, 488 to 489, and 509 to 510 each bind L-glutamate; these read SS and GG. Asn553 is a glycosylation site (N-linked (GlcNAc...) asparagine).

This sequence belongs to the gamma-glutamyltransferase family. In terms of tissue distribution, expressed in roots, cotyledons, leaves, flowers and siliques.

It localises to the vacuole membrane. The catalysed reaction is an N-terminal (5-L-glutamyl)-[peptide] + an alpha-amino acid = 5-L-glutamyl amino acid + an N-terminal L-alpha-aminoacyl-[peptide]. It carries out the reaction glutathione + H2O = L-cysteinylglycine + L-glutamate. The enzyme catalyses an S-substituted glutathione + H2O = an S-substituted L-cysteinylglycine + L-glutamate. It participates in sulfur metabolism; glutathione metabolism. In terms of biological role, may play a role in protecting plants from some xenobiotic chemicals by degrading vacuolar glutathione conjugates into cysteine conjugates. This Arabidopsis thaliana (Mouse-ear cress) protein is Glutathione hydrolase 3 (GGT3).